Consider the following 584-residue polypeptide: 65 kDa protein (584 aa).

The 90-residue stretch at 459–548 (YDLYIAESAI…TKKVENWLPP (90 aa)) folds into the Toprim domain.

The chain is 65 kDa protein from Zymomonas mobilis subsp. mobilis (strain ATCC 10988 / DSM 424 / LMG 404 / NCIMB 8938 / NRRL B-806 / ZM1).